The following is a 131-amino-acid chain: Histone H2A.1 (131 aa).

Serine 2 is subject to N-acetylserine. An N6-acetyllysine mark is found at lysine 5 and lysine 8. Glutamine 106 carries the N5-methylglutamine modification. A Phosphoserine modification is found at serine 128. The short motif at 128–129 (SQ) is the [ST]-Q motif element.

It belongs to the histone H2A family. The nucleosome is a histone octamer containing two molecules each of H2A, H2B, H3 and H4 assembled in one H3-H4 heterotetramer and two H2A-H2B heterodimers. The octamer wraps approximately 147 bp of DNA. Phosphorylated to form H2AS128ph (gamma-H2A) in response to DNA double-strand breaks (DSBs) generated by exogenous genotoxic agents and by stalled replication forks. Phosphorylation is dependent on the DNA damage checkpoint kinases MEC1/ATR and TEL1/ATM, spreads on either side of a detected DSB site and may mark the surrounding chromatin for recruitment of proteins required for DNA damage signaling and repair. Gamma-H2A is removed from the DNA prior to the strand invasion-primer extension step of the repair process and subsequently dephosphorylated by PPH3, a component of the histone H2A phosphatase complex (HTP-C). Dephosphorylation is necessary for efficient recovery from the DNA damage checkpoint. Post-translationally, acetylated by ESA1 to form H2AK4ac and H2AK7ac.

Its subcellular location is the nucleus. It localises to the chromosome. Core component of nucleosome which plays a central role in DNA double strand break (DSB) repair. Nucleosomes wrap and compact DNA into chromatin, limiting DNA accessibility to the cellular machineries which require DNA as a template. Histones thereby play a central role in transcription regulation, DNA repair, DNA replication and chromosomal stability. DNA accessibility is regulated via a complex set of post-translational modifications of histones, also called histone code, and nucleosome remodeling. The polypeptide is Histone H2A.1 (HTA1) (Candida glabrata (strain ATCC 2001 / BCRC 20586 / JCM 3761 / NBRC 0622 / NRRL Y-65 / CBS 138) (Yeast)).